Here is a 505-residue protein sequence, read N- to C-terminus: Poxin-Schlafen (505 aa).

Residues 1 to 238 (MAMFYAHAFG…SKEERVDYVL (238 aa)) are poxin-like. Catalysis depends on His-17, which acts as the Proton donor. Tyr-138 acts as the Shared with catalytic histidine of dimeric partner in catalysis. Lys-142 acts as the Proton acceptor; shared with catalytic histidine of dimeric partner in catalysis. The tract at residues 239–505 (MKRLESIRHL…PDEWVSHIKF (267 aa)) is schlafen-like.

The protein in the N-terminal section; belongs to the poxin family. It in the C-terminal section; belongs to the Schlafen protein family. Subgroup poxviridae B3 subfamily. Homodimer.

The enzyme catalyses 2',3'-cGAMP + H2O = Gp(2'-5')Ap(3') + H(+). Functionally, nuclease that is responsible for viral evasion of host cGAS-STING innate immunity. Cleaves 2',3'-cGAMP which is produced by host cGAS following recognition of cytosolic DNA and blocks the subsequent 2',3'-cGAMP-mediated activation of TMEM173/STING, which normally spreads to adjacent cells and activates the interferon and NF-kappa-B immune responses. The chain is Poxin-Schlafen (OPG188) from Bos taurus (Bovine).